The following is a 119-amino-acid chain: Large ribosomal subunit protein uL22 (119 aa).

This sequence belongs to the universal ribosomal protein uL22 family. As to quaternary structure, part of the 50S ribosomal subunit.

Functionally, this protein binds specifically to 23S rRNA; its binding is stimulated by other ribosomal proteins, e.g. L4, L17, and L20. It is important during the early stages of 50S assembly. It makes multiple contacts with different domains of the 23S rRNA in the assembled 50S subunit and ribosome. The globular domain of the protein is located near the polypeptide exit tunnel on the outside of the subunit, while an extended beta-hairpin is found that lines the wall of the exit tunnel in the center of the 70S ribosome. The protein is Large ribosomal subunit protein uL22 of Chlorobium phaeovibrioides (strain DSM 265 / 1930) (Prosthecochloris vibrioformis (strain DSM 265)).